The chain runs to 749 residues: Polyribonucleotide nucleotidyltransferase (749 aa).

Residues D487 and D493 each coordinate Mg(2+). Residues 554 to 613 enclose the KH domain; sequence PSTTTIKIDKDKIRDIIGPGGKIIKEICETSGAKIDISDDGTVSVYASDRDKLKVALDKI. The 69-residue stretch at 623 to 691 folds into the S1 motif domain; sequence GEIFNGTVVK…NKGKAKLTIK (69 aa). Residues 691-749 are disordered; the sequence is KNADKDKSSNNTKPKTNVNNTNKDNSEPEQRRDSSKKRAWNEDNNAETAEVITERKYFN. Low complexity predominate over residues 699–713; it reads SNNTKPKTNVNNTNK. Over residues 714–723 the composition is skewed to basic and acidic residues; sequence DNSEPEQRRD.

This sequence belongs to the polyribonucleotide nucleotidyltransferase family. The cofactor is Mg(2+).

The protein localises to the cytoplasm. It carries out the reaction RNA(n+1) + phosphate = RNA(n) + a ribonucleoside 5'-diphosphate. Involved in mRNA degradation. Catalyzes the phosphorolysis of single-stranded polyribonucleotides processively in the 3'- to 5'-direction. The chain is Polyribonucleotide nucleotidyltransferase from Rickettsia conorii (strain ATCC VR-613 / Malish 7).